We begin with the raw amino-acid sequence, 484 residues long: Glutamate--tRNA ligase (484 aa).

Positions 11-21 (PSPTGYLHIGN) match the 'HIGH' region motif. The 'KMSKS' region motif lies at 252-256 (KLSKR). Lys255 lines the ATP pocket.

This sequence belongs to the class-I aminoacyl-tRNA synthetase family. Glutamate--tRNA ligase type 1 subfamily. Monomer.

The protein localises to the cytoplasm. The catalysed reaction is tRNA(Glu) + L-glutamate + ATP = L-glutamyl-tRNA(Glu) + AMP + diphosphate. Functionally, catalyzes the attachment of glutamate to tRNA(Glu) in a two-step reaction: glutamate is first activated by ATP to form Glu-AMP and then transferred to the acceptor end of tRNA(Glu). The polypeptide is Glutamate--tRNA ligase (Staphylococcus aureus (strain Mu3 / ATCC 700698)).